The chain runs to 287 residues: Inorganic pyrophosphatase (287 aa).

R80 is a diphosphate binding site. Positions 117, 122, and 154 each coordinate Mg(2+).

The protein belongs to the PPase family. The cofactor is Mg(2+).

It localises to the cytoplasm. It catalyses the reaction diphosphate + H2O = 2 phosphate + H(+). The sequence is that of Inorganic pyrophosphatase (IPP1) from Yarrowia lipolytica (strain CLIB 122 / E 150) (Yeast).